The primary structure comprises 477 residues: Homeobox protein Meis2 (477 aa).

A required for interaction with PBX1 region spans residues 71–191; the sequence is DALKRDKDAI…KMPIDLVIDE (121 aa). An MEIS N-terminal domain is found at 110 to 193; it reads GGDVCSSDSF…PIDLVIDERD (84 aa). Basic and acidic residues predominate over residues 193 to 203; it reads DGSSKSDHEEL. Residues 193-283 are disordered; it reads DGSSKSDHEE…KKRQKKRGIF (91 aa). 2 stretches are compositionally biased toward polar residues: residues 204-217 and 239-251; these read SGSS…NPSS and GHAS…SSEQ. The homeobox; TALE-type DNA-binding region spans 276 to 338; the sequence is RQKKRGIFPK…NARRRIVQPM (63 aa). The segment at 299 to 333 is interaction with DNA; that stretch reads LTHPYPSEEQKKQLAQDTGLTILQVNNWFINARRR. Residues 340–477 are transcriptional activation domain; the sequence is DQSNRAGFLL…GGQVMDIHAQ (138 aa).

The protein belongs to the TALE/MEIS homeobox family. As to quaternary structure, monomer and homodimer. Heterodimer with HOXB13. Isoform Meis2A interacts with TLX1. Isoform Meis2B interacts with HOXA13 and PBX1 isoform PBX1b. Isoform Meis2D interacts with SP1, SP3 and KLF4. Isoform Meis2D interacts with PBX1 isoform PBX1a; the interaction partially relieves MEIS2 autoinhibition. Isoform Meis2B is part of a PDX1:PBX1b:MEIS2b complex; Meis2B is recruited by PBX1b and can be replaced by isoform Meis2D in a small fraction of complexes. Can form trimeric complexes including HOXB8 and PBX2 or PBX3. In terms of tissue distribution, displays spatially restricted expression patterns in the developing nervous system, limbs, face, and in various viscera. In adult, it is mainly expressed in the brain and female genital tract, with a different distribution of the alternative splice forms in these organs. Lower expression in lung and only basal level in heart, liver, kidney, spleen, and testis. Expressed in pancreatic islets (beta-cells only).

Its subcellular location is the nucleus. It localises to the cytoplasm. The protein localises to the perinuclear region. Involved in transcriptional regulation. Binds to HOX or PBX proteins to form dimers, or to a DNA-bound dimer of PBX and HOX proteins and thought to have a role in stabilization of the homeoprotein-DNA complex. Isoform Meis2B is required for the activity of a PDX1:PBX1b:MEIS2b complex in pancreatic acinar cells involved in the transcriptional activation of the ELA1 enhancer; the complex binds to the enhancer B element and cooperates with the transcription factor 1 complex (PTF1) bound to the enhancer A element; MEIS2 is not involved in complex DNA-binding. Probably in complex with PBX1, is involved in transcriptional regulation by KLF4. Isoforms Meis2B and Meis2D can bind to a EPHA8 promoter sequence containing the DNA motif 5'-CGGTCA-3'; in cooperation with a PBX protein (such as PBX2) is proposed to be involved in the transcriptional activation of EPHA8 in the developing midbrain. May be involved in regulation of myeloid differentiation. Can bind to the DNA sequence 5'-TGACAG-3'in the activator ACT sequence of the D(1A) dopamine receptor (DRD1) promoter and activate DRD1 transcription. The polypeptide is Homeobox protein Meis2 (Meis2) (Mus musculus (Mouse)).